The chain runs to 796 residues: MKALSCLLAVIATAGSLFQHVDARSHARDRLNNISRVERPVIHTPSHRVHAHSHFDLTFDLYPRSSRIKLQLEPNHDVLSHDARVAFLDGEGNVDRMERIERRDHRVFKGWAWVQRKSGSWERVGWARVMMQRDGEDPLFEGVFTVMHDHHQIIPKTKYVHKRHPHDPPLDATPGEYMLLFRGSDIRTQTHDTVERSITSSPSCDADTLAYGTQSDFMFPPLPQENNTNLWGSLMTSIGRRQNSDTVGTVPGSQNLRDTIGNTDGCPNTRRVALIGVVADCTYTSTFASEMDAKTDIISVVNAASVVYEHTFNISLTLGEVNILPKNCPATASSATPFNQMCGERVGDESFTLADRLNTFSAWRGKKSDDFAFWTLMTDCTTENQVGLAWAAQLCVKGVQGDSNTRNASSQAVSGANVVSKTDNTWQVFAHEAGHIFGAVHDCDSALCQDPSNPDNSRCCPSTATTCDAGGKFMMNPTSGSQITAFSPCSVGQICSRMAKHSILTNCLTTNRGVDTISGQQCGNGIVEDGEDCDCGGDESCKGNKCCDPKTCKYTSGSQCDDANEECCRDCKFASSSTICRLSSGPCDPEEKCTGNSGDCPRDTHSKNGETCGTNLQCASGQCTSRDLQCQMHLGSQVAGSRTVAFDSYGCQVACKDPYRPDVRYEGSLTFLDGTPCGGGGTCENGQCTGSTFGNEVSDWVSRHKPIVIGVAVGVGCLLLLAILSCICGRSKKRRPRNRKMAPINMRPMPPVYNGWTGPPPNAESPGGHPQYNHVPPPINAPPPAYPGRMPSTRYA.

The first 23 residues, 1–23 (MKALSCLLAVIATAGSLFQHVDA), serve as a signal peptide directing secretion. The Extracellular portion of the chain corresponds to 24-706 (RSHARDRLNN…VSDWVSRHKP (683 aa)). Residues Asn-33, Asn-226, Asn-313, and Asn-407 are each glycosylated (N-linked (GlcNAc...) asparagine). The 240-residue stretch at 271–510 (RVALIGVVAD…HSILTNCLTT (240 aa)) folds into the Peptidase M12B domain. Intrachain disulfides connect Cys-395/Cys-495, Cys-448/Cys-459, and Cys-580/Cys-600. His-431 serves as a coordination point for Zn(2+). Residue Glu-432 is part of the active site. Residues His-435 and His-441 each coordinate Zn(2+). In terms of domain architecture, Disintegrin spans 519–608 (GQQCGNGIVE…DCPRDTHSKN (90 aa)). A helical membrane pass occupies residues 707–727 (IVIGVAVGVGCLLLLAILSCI). Residues 728-796 (CGRSKKRRPR…PGRMPSTRYA (69 aa)) are Cytoplasmic-facing. Residues 737–796 (RNRKMAPINMRPMPPVYNGWTGPPPNAESPGGHPQYNHVPPPINAPPPAYPGRMPSTRYA) form a disordered region. Pro residues predominate over residues 775-786 (VPPPINAPPPAY).

It depends on Zn(2+) as a cofactor.

Its subcellular location is the membrane. Functionally, probable zinc protease. The sequence is that of Disintegrin and metalloproteinase domain-containing protein B (ADM-B) from Arthroderma otae (strain ATCC MYA-4605 / CBS 113480) (Microsporum canis).